Reading from the N-terminus, the 277-residue chain is MLQPEIIEFLASTTPQILAKNIPVTENRESKRHDIQQKAEAGEEKAVSPFEFRPQRLRFAVEDEYFEDGDINRHMYLQNIVTSFVDDKQPPTISEFRCHIAGCKQLFDTLEGYEHHYNALHRNVCSNCKRSFPSNRLLEIHILEWHDSLFQIMAEKQCMYECLVEGCGLKFKTSKERKDHLIRTHSYPADFRFDKSKKIGRTTEKKTQQKKDAHMEVSATVLQQESSESMDFSLTPEPVETEPMQAANLKPRYSYKVPSSICFGQGSVRGFRGRRKK.

3 consecutive C2H2-type zinc fingers follow at residues 96 to 121, 123 to 146, and 160 to 185; these read FRCH…NALH, NVCS…LEWH, and YECL…IRTH. The disordered stretch occupies residues 225–244; the sequence is ESSESMDFSLTPEPVETEPM.

This sequence belongs to the krueppel C2H2-type zinc-finger protein family.

It is found in the nucleus. May be involved in transcriptional regulation. This chain is Zinc finger protein 511 (znf511), found in Danio rerio (Zebrafish).